We begin with the raw amino-acid sequence, 874 residues long: Cyanophycin synthetase (874 aa).

In terms of domain architecture, ATP-grasp spans 224 to 480 (KTTLAEAGIP…VAAPVIDMLF (257 aa)). Residue 495–501 (GTNGKTT) participates in ATP binding.

The protein in the C-terminal section; belongs to the MurCDEF family. In terms of assembly, homodimer.

It catalyses the reaction [L-4-(L-arginin-2-N-yl)aspartate](n) + L-aspartate + ATP = [L-4-(L-arginin-2-N-yl)aspartate](n)-L-aspartate + ADP + phosphate + H(+). It carries out the reaction [L-4-(L-arginin-2-N-yl)aspartate](n)-L-aspartate + L-arginine + ATP = [L-4-(L-arginin-2-N-yl)aspartate](n+1) + ADP + phosphate + H(+). Functionally, catalyzes the ATP-dependent polymerization of arginine and aspartate to multi-L-arginyl-poly-L-aspartic acid (cyanophycin; a water-insoluble reserve polymer). This Geminocystis herdmanii (strain PCC 6308) (Synechocystis sp. (strain PCC 6308)) protein is Cyanophycin synthetase (cphA).